We begin with the raw amino-acid sequence, 105 residues long: NADH-quinone oxidoreductase subunit K (105 aa).

A run of 3 helical transmembrane segments spans residues 7–27 (IGVN…MFAV), 34–54 (IVIL…FLTF), and 66–86 (FSLF…AIVI).

It belongs to the complex I subunit 4L family. In terms of assembly, NDH-1 is composed of 14 different subunits. Subunits NuoA, H, J, K, L, M, N constitute the membrane sector of the complex.

Its subcellular location is the cell inner membrane. It carries out the reaction a quinone + NADH + 5 H(+)(in) = a quinol + NAD(+) + 4 H(+)(out). Its function is as follows. NDH-1 shuttles electrons from NADH, via FMN and iron-sulfur (Fe-S) centers, to quinones in the respiratory chain. The immediate electron acceptor for the enzyme in this species is believed to be a menaquinone. Couples the redox reaction to proton translocation (for every two electrons transferred, four hydrogen ions are translocated across the cytoplasmic membrane), and thus conserves the redox energy in a proton gradient. This Chlorobaculum parvum (strain DSM 263 / NCIMB 8327) (Chlorobium vibrioforme subsp. thiosulfatophilum) protein is NADH-quinone oxidoreductase subunit K.